The following is a 159-amino-acid chain: Regulatory protein RecX (159 aa).

The protein belongs to the RecX family.

It is found in the cytoplasm. Functionally, modulates RecA activity. The protein is Regulatory protein RecX of Chlorobium limicola (strain DSM 245 / NBRC 103803 / 6330).